The sequence spans 392 residues: S-adenosylmethionine synthase (392 aa).

Residue His-17 coordinates ATP. Asp-19 is a Mg(2+) binding site. Position 45 (Glu-45) interacts with K(+). Residues Glu-58 and Gln-102 each coordinate L-methionine. The tract at residues 102-112 (QSADIAQGVDA) is flexible loop. Residues 169–171 (DAK), 235–236 (KF), Asp-244, 250–251 (RK), Ala-267, and Lys-271 each bind ATP. L-methionine is bound at residue Asp-244. Lys-275 lines the L-methionine pocket.

The protein belongs to the AdoMet synthase family. In terms of assembly, homotetramer; dimer of dimers. Mg(2+) is required as a cofactor. K(+) serves as cofactor.

It is found in the cytoplasm. It carries out the reaction L-methionine + ATP + H2O = S-adenosyl-L-methionine + phosphate + diphosphate. It functions in the pathway amino-acid biosynthesis; S-adenosyl-L-methionine biosynthesis; S-adenosyl-L-methionine from L-methionine: step 1/1. Functionally, catalyzes the formation of S-adenosylmethionine (AdoMet) from methionine and ATP. The overall synthetic reaction is composed of two sequential steps, AdoMet formation and the subsequent tripolyphosphate hydrolysis which occurs prior to release of AdoMet from the enzyme. The chain is S-adenosylmethionine synthase from Methylobacterium nodulans (strain LMG 21967 / CNCM I-2342 / ORS 2060).